The chain runs to 119 residues: Protein TusC (119 aa).

The protein belongs to the DsrF/TusC family. In terms of assembly, heterohexamer, formed by a dimer of trimers. The hexameric TusBCD complex contains 2 copies each of TusB, TusC and TusD. The TusBCD complex interacts with TusE.

It is found in the cytoplasm. In terms of biological role, part of a sulfur-relay system required for 2-thiolation of 5-methylaminomethyl-2-thiouridine (mnm(5)s(2)U) at tRNA wobble positions. The protein is Protein TusC of Buchnera aphidicola subsp. Acyrthosiphon pisum (strain 5A).